A 91-amino-acid polypeptide reads, in one-letter code: Small ribosomal subunit protein uS19 (91 aa).

It belongs to the universal ribosomal protein uS19 family.

In terms of biological role, protein S19 forms a complex with S13 that binds strongly to the 16S ribosomal RNA. The sequence is that of Small ribosomal subunit protein uS19 from Synechococcus sp. (strain WH7803).